Reading from the N-terminus, the 671-residue chain is DNA ligase (671 aa).

Residues 32 to 36 (DAEYD), 81 to 82 (SL), and Glu-113 each bind NAD(+). The active-site N6-AMP-lysine intermediate is the Lys-115. Positions 136, 173, 290, and 314 each coordinate NAD(+). Positions 408, 411, 426, and 432 each coordinate Zn(2+). In terms of domain architecture, BRCT spans 593 to 671 (EIDSPFAGKT…EAEMIRLLGA (79 aa)).

Belongs to the NAD-dependent DNA ligase family. LigA subfamily. It depends on Mg(2+) as a cofactor. Requires Mn(2+) as cofactor.

The enzyme catalyses NAD(+) + (deoxyribonucleotide)n-3'-hydroxyl + 5'-phospho-(deoxyribonucleotide)m = (deoxyribonucleotide)n+m + AMP + beta-nicotinamide D-nucleotide.. Its function is as follows. DNA ligase that catalyzes the formation of phosphodiester linkages between 5'-phosphoryl and 3'-hydroxyl groups in double-stranded DNA using NAD as a coenzyme and as the energy source for the reaction. It is essential for DNA replication and repair of damaged DNA. The sequence is that of DNA ligase from Salmonella paratyphi B (strain ATCC BAA-1250 / SPB7).